Reading from the N-terminus, the 186-residue chain is Peptide deformylase (186 aa).

Residues C113 and H156 each coordinate Fe cation. E157 is an active-site residue. H160 contributes to the Fe cation binding site.

It belongs to the polypeptide deformylase family. The cofactor is Fe(2+).

It catalyses the reaction N-terminal N-formyl-L-methionyl-[peptide] + H2O = N-terminal L-methionyl-[peptide] + formate. In terms of biological role, removes the formyl group from the N-terminal Met of newly synthesized proteins. Requires at least a dipeptide for an efficient rate of reaction. N-terminal L-methionine is a prerequisite for activity but the enzyme has broad specificity at other positions. This is Peptide deformylase from Limosilactobacillus reuteri (strain DSM 20016) (Lactobacillus reuteri).